Consider the following 345-residue polypeptide: Glycosyltransferase 1 domain-containing protein 1 (345 aa).

The N-terminal stretch at 1-19 (MKILFLACLRAHTGNSTTA) is a signal peptide. Asn246 and Asn322 each carry an N-linked (GlcNAc...) asparagine glycan.

This sequence belongs to the glycosyltransferase group 1 family. Glycosyltransferase 4 subfamily.

It is found in the secreted. In Xenopus tropicalis (Western clawed frog), this protein is Glycosyltransferase 1 domain-containing protein 1 (glt1d1).